The chain runs to 664 residues: Macoilin (664 aa).

4 helical membrane passes run 28 to 48, 75 to 95, 120 to 140, and 154 to 174; these read TFLY…DFVV, AFSV…LLFI, VCLP…AIRF, and FAAH…KSYV. The span at 253-265 shows a compositional bias: basic and acidic residues; sequence REKGKEKDKDAKK. Positions 253–274 are disordered; the sequence is REKGKEKDKDAKKHNLGINNNN. S305 carries the phosphoserine modification. Polar residues predominate over residues 320 to 348; sequence KNYKNASGVVNSSPRSHSATNGSIPSSSS. The interval 320 to 375 is disordered; that stretch reads KNYKNASGVVNSSPRSHSATNGSIPSSSSKNEKKQKCTSKSPSTHKDLMENCIPNN. N324 is a glycosylation site (N-linked (GlcNAc...) asparagine). Phosphoserine is present on S332. 2 N-linked (GlcNAc...) asparagine glycosylation sites follow: N340 and N452. The disordered stretch occupies residues 630-664; the sequence is TSPLSPVSPHYSSKFVETSPSGLDPNASVYQPLKK. A phosphoserine mark is found at S631 and S634. N655 carries N-linked (GlcNAc...) asparagine glycosylation.

It belongs to the macoilin family.

It is found in the rough endoplasmic reticulum membrane. The protein resides in the nucleus membrane. Plays a role in the regulation of neuronal activity. The chain is Macoilin (MACO1) from Pan troglodytes (Chimpanzee).